We begin with the raw amino-acid sequence, 361 residues long: Inactive 2'-5'-oligoadenylate synthase 1D (361 aa).

Belongs to the 2-5A synthase family. In terms of assembly, interacts with OAS1A, the interaction inhibits OAS1A catalytic activity. As to expression, expressed specifically in oocytes (at protein level). Expressed at highest level in ovary with lesser amounts in intestine, brain, thymus lung, kidney, liver and uterus.

It localises to the cytoplasm. In terms of biological role, does not have 2'-5'-oligoadenylate synthetase activity, but can bind double-stranded RNA. May play a role in the control of female fertility, possibly by binding to and inhibiting OAS1A. This Mus musculus (Mouse) protein is Inactive 2'-5'-oligoadenylate synthase 1D.